We begin with the raw amino-acid sequence, 503 residues long: MPCACNRNNWRKWIRPLLILLYALAILVTVPVCIWEFQKLKVGIHTKVWFIAGIFLLLTIPVSMCGILQHLVHYTQPELQKPIIRILWMVPIYSLDSWVALKYPKIAIYVDTWRECYEAYVIYNFMIFLTNYLTIRFPNLMLHLEAKDQQNHLPPLCCCPPWAMGEMLLFRCKLGVLQYTVVRPITTVTSLVCEILGVYDEGNFSFSNAWTYLVILNNLSQLFAMYCLLLFYKVLKEELSPIQPVGKFLCVKLVVFVSFWQAVLIALLVKVGVISEKRTWEWQSAEAVATGLQDFIICIEMFFAAIAHHYTFSYKPYVHEAEEGPCFDSFLAMWDVSDIREDISEQVRRVGRTMRGYPKKKCFPGDPDHNEHSSLLSASSQDSSKPSSPVGLYQGFGQTITSQSPISIANLYEEILNEIPEEQQRLYSGQDITMDIPEEQPRHDTGQDVVHLPYRQELPYKNHYQDHIQTVTSRYLLSSPKPSDDIVIDFSDSPEGSDSSTDS.

The next 7 membrane-spanning stretches (helical) occupy residues 17–37, 48–68, 83–103, 115–135, 212–232, 254–274, and 287–307; these read LLIL…IWEF, VWFI…CGIL, IIRI…ALKY, ECYE…YLTI, YLVI…LLFY, VVFV…VGVI, and AVAT…AAIA. 2 disordered regions span residues 358 to 391 and 479 to 503; these read PKKK…SPVG and SPKP…STDS. Positions 373 to 388 are enriched in low complexity; that stretch reads SSLLSASSQDSSKPSS. Over residues 494-503 the composition is skewed to polar residues; it reads PEGSDSSTDS.

Belongs to the TMEM184 family.

It localises to the membrane. Functionally, possible tumor suppressor which may play a role in cell growth. The protein is Transmembrane protein 184C (Tmem184c) of Rattus norvegicus (Rat).